Reading from the N-terminus, the 160-residue chain is NADH-quinone oxidoreductase subunit B (160 aa).

Positions 37, 38, 102, and 132 each coordinate [4Fe-4S] cluster.

This sequence belongs to the complex I 20 kDa subunit family. In terms of assembly, NDH-1 is composed of 14 different subunits. Subunits NuoB, C, D, E, F, and G constitute the peripheral sector of the complex. It depends on [4Fe-4S] cluster as a cofactor.

It localises to the cell membrane. It catalyses the reaction a quinone + NADH + 5 H(+)(in) = a quinol + NAD(+) + 4 H(+)(out). In terms of biological role, NDH-1 shuttles electrons from NADH, via FMN and iron-sulfur (Fe-S) centers, to quinones in the respiratory chain. Couples the redox reaction to proton translocation (for every two electrons transferred, four hydrogen ions are translocated across the cytoplasmic membrane), and thus conserves the redox energy in a proton gradient. The sequence is that of NADH-quinone oxidoreductase subunit B from Polynucleobacter asymbioticus (strain DSM 18221 / CIP 109841 / QLW-P1DMWA-1) (Polynucleobacter necessarius subsp. asymbioticus).